Reading from the N-terminus, the 144-residue chain is UPF0102 protein BTH_I3148 (144 aa).

The disordered stretch occupies residues 1–20 (MCHARAARQATGEAEAAPRD).

This sequence belongs to the UPF0102 family.

The sequence is that of UPF0102 protein BTH_I3148 from Burkholderia thailandensis (strain ATCC 700388 / DSM 13276 / CCUG 48851 / CIP 106301 / E264).